The chain runs to 481 residues: UDP-glycosyltransferase 72B3 (481 aa).

Residues serine 277, 347–349, 364–372, and 386–389 each bind UDP-alpha-D-glucose; these read APQ, HCGWNSSLE, and YAEQ.

Belongs to the UDP-glycosyltransferase family.

Functionally, possesses low quercetin 3-O-glucosyltransferase activity in vitro. This Arabidopsis thaliana (Mouse-ear cress) protein is UDP-glycosyltransferase 72B3 (UGT72B3).